The following is a 652-amino-acid chain: Apicoplast pyruvate carrier 2 (652 aa).

Over 1-45 (MSAFPASPQPSAFPASPQPSAFPASPQPSASPVSPRHCVSPSSGT) the chain is Cytoplasmic. A disordered region spans residues 1-53 (MSAFPASPQPSAFPASPQPSAFPASPQPSASPVSPRHCVSPSSGTLPSSSSPS). The next 12 membrane-spanning stretches (helical) occupy residues 46-66 (LPSS…SSSS), 126-146 (NLLP…AVSY), 167-187 (GTTL…SAWM), 189-209 (LGLA…IAYG), 212-232 (TALG…KLSP), 278-298 (LPYL…SSLN), 345-365 (LVDP…AERQ), 385-405 (SCSA…ICSS), 417-437 (LSWQ…LYPE), 445-465 (AAPA…PRAL), 467-487 (SASR…SLTG), and 515-535 (LWGY…MNAL). Over 536-652 (TAPCLFALST…LPYRFPTYSP (117 aa)) the chain is Cytoplasmic.

Belongs to the major facilitator superfamily. As to quaternary structure, interacts with apicoplast pyruvate carrier 1.

The protein localises to the plastid. It is found in the apicoplast. Its subcellular location is the membrane. Functionally, along with apicoplast pyruvate carrier 1, forms apicoplast pyruvate carrier (APC) complex, which transports pyruvate into the apicoplast and may also transport amino acids like methionine, serine, glycine and tryptophan with low efficiency. Required for maintaining pyruvate-dependent metabolic activities in the apicoplast, such as synthesis of fatty acids, isopentenyl pyrophosphate (IPP), dimethylallyl pyrophosphate (DMAPP) and methylerythritol 4-phosphate (MEP). Required for maintaining the integrity of the apicoplast. Required for normal parasite growth. The protein is Apicoplast pyruvate carrier 2 of Toxoplasma gondii.